A 256-amino-acid polypeptide reads, in one-letter code: Hemin import ATP-binding protein HmuV (256 aa).

The region spanning 2–238 is the ABC transporter domain; that stretch reads ISAQNLVYSL…QELTMLYGAD (237 aa). 34 to 41 serves as a coordination point for ATP; it reads GPNGAGKS.

The protein belongs to the ABC transporter superfamily. Heme (hemin) importer (TC 3.A.1.14.5) family. In terms of assembly, the complex is composed of two ATP-binding proteins (HmuV), two transmembrane proteins (HmuU) and a solute-binding protein (HmuT).

It localises to the cell inner membrane. Part of the ABC transporter complex HmuTUV involved in hemin import. Responsible for energy coupling to the transport system. This chain is Hemin import ATP-binding protein HmuV, found in Shigella dysenteriae.